Here is a 176-residue protein sequence, read N- to C-terminus: Oxaleimides biosynthesis cluster protein N (176 aa).

A run of 4 helical transmembrane segments spans residues 5 to 25 (LLVVSAGSLALKVLRVTPLIT), 71 to 91 (VWTGVISIVLFTRVALILNLF), 104 to 124 (FLYGVGLFLSFAHLSVAPKML), and 155 to 175 (FWIVDVPFWVVGVWATLEGLK).

The protein localises to the membrane. Its pathway is secondary metabolite biosynthesis. Functionally, part of the gene cluster that mediates the biosynthesis of oxaleimides, cytotoxic compounds containing an unusual disubstituted succinimide moiety. The first step of the pathway is provided by the HR-PKS poxF that serves in a new mode of collaborative biosynthesis with the PKS-NRPS poxE, by providing the olefin containing amino acid substrate via the synthesis of an ACP-bound dec-4-enoate. The cytochrome P450 monooxygenase poxM-catalyzed oxidation at the alpha-position creates the enzyme-bound 2-hydroxydec-4-enoyl-ACP thioester, which may be prone to spontaneous hydrolysis to yield 2-hydroxydec-4-enoic acid due to increased electrophilicity of the carbonyl. 2-hydroxydec-4-enoic acid can then be further oxidized by poxM to yield the alpha-ketoacid 2-oxodec-4-enoicacid, which is reductively aminated by the aminotransferase poxL to yield (S,E)-2-aminodec-4-enoic acid. The Hybrid PKS-NRPS synthetase poxE then performs condensation between the octaketide product of its PKS modules and the amino group of (S,E)-2-aminodec-4-enoic acid which is activated and incorporated by the adenylation domain. The resulting aminoacyl product can be cyclized by the Diels-Alderase PoxQ and reductively released by the reductive (R) domain of poxE to yield an aldehyde intermediate. The released aldehyde is then substrate for a Knoevenagel condensation by the hydrolyase poxO followed by an oxidation at the 5-position of the pyrrolidone ring. The presence of the olefin from the amino acid building block allows for migration of the substituted allyl group to occur. This allylic transposition reaction takes place in a conjugate addition, semipinacol-like fashion to yield a succinimide intermediate. Iterative two-electron oxidations of the C7 methyl of the succinimide intermediate to the carboxylic acid can be catalyzed by one of two remaining cytochrome P450 monooxygenasess poxC or poxD to yield oxaleimide A. Subsequent oxidation yields the maleimide scaffold oxaleimide I. Both oxaleimide A and oxaleimide I can undergo oxidative modifications in the decalin ring to yield the series of products oxaleimides B to H. This Penicillium oxalicum (strain 114-2 / CGMCC 5302) (Penicillium decumbens) protein is Oxaleimides biosynthesis cluster protein N.